The chain runs to 27 residues: uncharacterized protein (27 aa).

Its subcellular location is the plastid. The protein resides in the chloroplast. This is an uncharacterized protein from Trieres chinensis (Marine centric diatom).